Reading from the N-terminus, the 109-residue chain is Large ribosomal subunit protein uL23 (109 aa).

This sequence belongs to the universal ribosomal protein uL23 family. As to quaternary structure, part of the 50S ribosomal subunit. Contacts protein L29, and trigger factor when it is bound to the ribosome.

One of the early assembly proteins it binds 23S rRNA. One of the proteins that surrounds the polypeptide exit tunnel on the outside of the ribosome. Forms the main docking site for trigger factor binding to the ribosome. This chain is Large ribosomal subunit protein uL23, found in Haemophilus influenzae (strain PittEE).